Consider the following 360-residue polypeptide: Phosphoserine aminotransferase (360 aa).

R43 is an L-glutamate binding site. Pyridoxal 5'-phosphate-binding positions include 77–78 (AS), W103, T152, D172, and Q195. N6-(pyridoxal phosphate)lysine is present on K196. Position 237–238 (237–238 (NT)) interacts with pyridoxal 5'-phosphate.

The protein belongs to the class-V pyridoxal-phosphate-dependent aminotransferase family. SerC subfamily. In terms of assembly, homodimer. Requires pyridoxal 5'-phosphate as cofactor.

The protein resides in the cytoplasm. It carries out the reaction O-phospho-L-serine + 2-oxoglutarate = 3-phosphooxypyruvate + L-glutamate. The catalysed reaction is 4-(phosphooxy)-L-threonine + 2-oxoglutarate = (R)-3-hydroxy-2-oxo-4-phosphooxybutanoate + L-glutamate. It functions in the pathway amino-acid biosynthesis; L-serine biosynthesis; L-serine from 3-phospho-D-glycerate: step 2/3. It participates in cofactor biosynthesis; pyridoxine 5'-phosphate biosynthesis; pyridoxine 5'-phosphate from D-erythrose 4-phosphate: step 3/5. Functionally, catalyzes the reversible conversion of 3-phosphohydroxypyruvate to phosphoserine and of 3-hydroxy-2-oxo-4-phosphonooxybutanoate to phosphohydroxythreonine. The polypeptide is Phosphoserine aminotransferase (Syntrophobacter fumaroxidans (strain DSM 10017 / MPOB)).